Here is a 219-residue protein sequence, read N- to C-terminus: Ribose-5-phosphate isomerase A (219 aa).

Residues 28 to 31 (TGST), 81 to 84 (DGAD), and 94 to 97 (KGGG) each bind substrate. The active-site Proton acceptor is Glu-103. Substrate is bound at residue Lys-121.

The protein belongs to the ribose 5-phosphate isomerase family. In terms of assembly, homodimer.

The enzyme catalyses aldehydo-D-ribose 5-phosphate = D-ribulose 5-phosphate. It participates in carbohydrate degradation; pentose phosphate pathway; D-ribose 5-phosphate from D-ribulose 5-phosphate (non-oxidative stage): step 1/1. Catalyzes the reversible conversion of ribose-5-phosphate to ribulose 5-phosphate. The chain is Ribose-5-phosphate isomerase A from Nitrosomonas europaea (strain ATCC 19718 / CIP 103999 / KCTC 2705 / NBRC 14298).